We begin with the raw amino-acid sequence, 365 residues long: Forkhead box protein E4 (365 aa).

Basic and acidic residues predominate over residues 1–13 (MDSPDSVRVKCES). A disordered region spans residues 1–46 (MDSPDSVRVKCESKGSCSPEEGLNNGLPEEHNQASGGRRRKRPVQR). The segment at residues 48 to 142 (KPPYSYIALI…DNGSFLRRRK (95 aa)) is a DNA-binding region (fork-head).

In terms of tissue distribution, first expressed at the end of gastrulation (stage 13) in the anterior ectodermal placode. During intermediate neural plate stages (stages 14-16), expression expands to the presumptive nasal ectoderm (PNE) and the presumptive lens ectoderm (PLE). By stages 18-21, expression begins to deplete in the PNE, while intensifying in the PLE so that by late neural stages (stages 22), expression is restricted to the PLE. Throughout tailbud stages (stage 23-31), expression is maintained in the lens placode and lens vesicle. In the maturing lens (stage 32-onwards), expression is restricted to the anterior lens epithelium, where it remains during the tadpole stage. In tadpoles there is additional expression in the ventral midline of the pharynx. Expression continues in the adult eye.

It is found in the nucleus. In terms of biological role, probable transcription factor. Mediates lens formation in the embryo by promoting the proliferation of the specified lens ectoderm and suppressing its terminal differentiation. The polypeptide is Forkhead box protein E4 (Xenopus laevis (African clawed frog)).